Reading from the N-terminus, the 277-residue chain is Phosphate import ATP-binding protein PstB 2 (277 aa).

Residues 31–272 (IEVPGLSLFY…PAKKQTEDYI (242 aa)) enclose the ABC transporter domain. 63 to 70 (GPSGCGKS) contacts ATP.

Belongs to the ABC transporter superfamily. Phosphate importer (TC 3.A.1.7) family. As to quaternary structure, the complex is composed of two ATP-binding proteins (PstB), two transmembrane proteins (PstC and PstA) and a solute-binding protein (PstS).

It is found in the cell inner membrane. The catalysed reaction is phosphate(out) + ATP + H2O = ADP + 2 phosphate(in) + H(+). Its function is as follows. Part of the ABC transporter complex PstSACB involved in phosphate import. Responsible for energy coupling to the transport system. This chain is Phosphate import ATP-binding protein PstB 2, found in Pseudomonas putida (strain ATCC 47054 / DSM 6125 / CFBP 8728 / NCIMB 11950 / KT2440).